The chain runs to 294 residues: 4-hydroxybenzoate octaprenyltransferase (294 aa).

Transmembrane regions (helical) follow at residues 20-42, 98-118, 120-140, 145-165, 175-195, 218-238, 242-262, and 274-294; these read LLRI…ALWL, WEAV…VVLF, NTLT…YPFM, HLPQ…AWAA, WLLF…YAMV, AIIA…GQRA, SFYY…QYLA, and FLNN…DLAF.

Belongs to the UbiA prenyltransferase family. Mg(2+) serves as cofactor.

The protein localises to the cell inner membrane. It catalyses the reaction all-trans-octaprenyl diphosphate + 4-hydroxybenzoate = 4-hydroxy-3-(all-trans-octaprenyl)benzoate + diphosphate. Its pathway is cofactor biosynthesis; ubiquinone biosynthesis. Functionally, catalyzes the prenylation of para-hydroxybenzoate (PHB) with an all-trans polyprenyl group. Mediates the second step in the final reaction sequence of ubiquinone-8 (UQ-8) biosynthesis, which is the condensation of the polyisoprenoid side chain with PHB, generating the first membrane-bound Q intermediate 3-octaprenyl-4-hydroxybenzoate. This Marinobacter nauticus (strain ATCC 700491 / DSM 11845 / VT8) (Marinobacter aquaeolei) protein is 4-hydroxybenzoate octaprenyltransferase.